We begin with the raw amino-acid sequence, 458 residues long: MSHTDTIVAQATPIGRGGIGILRISGCATKTVAKEILGKLPRARYAEYLAFKDPEGNILDQGIALYFPAPHSFTGEDVLELQGHGGPIILDLLLKAILNLPDVCVRIARPGEFSERAFLNDKLDLVQAEAVADLIDASTEQAARCALHSLKGTFSLRINQLIESLTYLRVYIEASMDFSDEEIDFLSDGKIETQLDRVIHDLDKVRSEARQGQLLREGMKIVIAGRPNVGKSSLLNALTGRETAIVTQIPGTTRDVLREQIQINGMPLHIIDTAGLRETEDPVEKIGIERAWNEIEQADRILFIVDGSTSSEKTIYPLWPEWEARLSRSRLPITLIRNKSDITGEDVALTETEEGTFISLSARTGEGIDLLREHLQQTMGFSGNMEGGFLARRRHLEALENAAQYLLSARQKWSSGNFLSELLAEELRLAQQVLSEITGQVSSNDLLGIIFSSFCIGK.

Arginine 23, glutamate 80, and lysine 122 together coordinate (6S)-5-formyl-5,6,7,8-tetrahydrofolate. In terms of domain architecture, TrmE-type G spans 218–380; that stretch reads GMKIVIAGRP…LREHLQQTMG (163 aa). Asparagine 228 is a K(+) binding site. GTP contacts are provided by residues 228–233, 247–253, 272–275, and 361–363; these read NVGKSS, TQIPGTT, DTAG, and SAR. Serine 232 provides a ligand contact to Mg(2+). K(+)-binding residues include threonine 247, isoleucine 249, and threonine 252. Threonine 253 contributes to the Mg(2+) binding site. Residue lysine 458 participates in (6S)-5-formyl-5,6,7,8-tetrahydrofolate binding.

Belongs to the TRAFAC class TrmE-Era-EngA-EngB-Septin-like GTPase superfamily. TrmE GTPase family. In terms of assembly, homodimer. Heterotetramer of two MnmE and two MnmG subunits. K(+) is required as a cofactor.

It is found in the cytoplasm. In terms of biological role, exhibits a very high intrinsic GTPase hydrolysis rate. Involved in the addition of a carboxymethylaminomethyl (cmnm) group at the wobble position (U34) of certain tRNAs, forming tRNA-cmnm(5)s(2)U34. This chain is tRNA modification GTPase MnmE, found in Hamiltonella defensa subsp. Acyrthosiphon pisum (strain 5AT).